We begin with the raw amino-acid sequence, 315 residues long: Serpentine receptor class delta-31 (315 aa).

Transmembrane regions (helical) follow at residues 6 to 26, 38 to 58, 83 to 103, 124 to 144, 174 to 194, 225 to 245, and 256 to 276; these read LHSI…YLAI, AIIT…FFVM, ACYV…IWMI, VFVA…WFSI, ITLI…YIWI, FQVF…SMFT, and AISV…ILFV.

The protein belongs to the nematode receptor-like protein srd family.

Its subcellular location is the membrane. In Caenorhabditis elegans, this protein is Serpentine receptor class delta-31 (srd-31).